Consider the following 118-residue polypeptide: Large ribosomal subunit protein bL20 (118 aa).

This sequence belongs to the bacterial ribosomal protein bL20 family.

In terms of biological role, binds directly to 23S ribosomal RNA and is necessary for the in vitro assembly process of the 50S ribosomal subunit. It is not involved in the protein synthesizing functions of that subunit. The polypeptide is Large ribosomal subunit protein bL20 (Pectobacterium atrosepticum (strain SCRI 1043 / ATCC BAA-672) (Erwinia carotovora subsp. atroseptica)).